The primary structure comprises 150 residues: NADH-quinone oxidoreductase subunit A (150 aa).

3 consecutive transmembrane segments (helical) span residues 14 to 34, 70 to 90, and 98 to 118; these read WAFA…LLGA, LVAM…AWAV, and LGFI…FYLV.

Belongs to the complex I subunit 3 family. As to quaternary structure, NDH-1 is composed of 13 different subunits. Subunits NuoA, H, J, K, L, M, N constitute the membrane sector of the complex.

The protein resides in the cell inner membrane. It carries out the reaction a quinone + NADH + 5 H(+)(in) = a quinol + NAD(+) + 4 H(+)(out). Functionally, NDH-1 shuttles electrons from NADH, via FMN and iron-sulfur (Fe-S) centers, to quinones in the respiratory chain. The immediate electron acceptor for the enzyme in this species is believed to be ubiquinone. Couples the redox reaction to proton translocation (for every two electrons transferred, four hydrogen ions are translocated across the cytoplasmic membrane), and thus conserves the redox energy in a proton gradient. This Proteus mirabilis (strain HI4320) protein is NADH-quinone oxidoreductase subunit A.